A 94-amino-acid chain; its full sequence is uncharacterized protein (94 aa).

This is an uncharacterized protein from Narcissus mosaic virus (NMV).